A 290-amino-acid polypeptide reads, in one-letter code: Nucleotide-binding protein Aave_3603 (290 aa).

An ATP-binding site is contributed by 13–20; sequence GMSGSGKS. Residue 62-65 coordinates GTP; sequence DVRS.

It belongs to the RapZ-like family.

In terms of biological role, displays ATPase and GTPase activities. This chain is Nucleotide-binding protein Aave_3603, found in Paracidovorax citrulli (strain AAC00-1) (Acidovorax citrulli).